The chain runs to 298 residues: Probable phosphite transport system-binding protein HtxB (298 aa).

A signal peptide spans 1-33; the sequence is MQVFTLFSKFKKALTRAILAFIATIIVCTPAQA.

It belongs to the phosphate/phosphite/phosphonate binding protein family.

Functionally, probably forms part of a binding-protein-dependent hypophosphite transporter. The polypeptide is Probable phosphite transport system-binding protein HtxB (htxB) (Stutzerimonas stutzeri (Pseudomonas stutzeri)).